Consider the following 319-residue polypeptide: Beta-ketoacyl-[acyl-carrier-protein] synthase III (319 aa).

Active-site residues include cysteine 115 and histidine 246. The interval 247–251 (QANLR) is ACP-binding. The active site involves asparagine 276.

The protein belongs to the thiolase-like superfamily. FabH family. As to quaternary structure, homodimer.

It is found in the cytoplasm. The catalysed reaction is malonyl-[ACP] + acetyl-CoA + H(+) = 3-oxobutanoyl-[ACP] + CO2 + CoA. It participates in lipid metabolism; fatty acid biosynthesis. In terms of biological role, catalyzes the condensation reaction of fatty acid synthesis by the addition to an acyl acceptor of two carbons from malonyl-ACP. Catalyzes the first condensation reaction which initiates fatty acid synthesis and may therefore play a role in governing the total rate of fatty acid production. Possesses both acetoacetyl-ACP synthase and acetyl transacylase activities. Its substrate specificity determines the biosynthesis of branched-chain and/or straight-chain of fatty acids. This chain is Beta-ketoacyl-[acyl-carrier-protein] synthase III, found in Coxiella burnetii (strain CbuK_Q154) (Coxiella burnetii (strain Q154)).